Reading from the N-terminus, the 990-residue chain is Chondroitin sulfate ABC exolyase (990 aa).

The active-site Proton acceptor is His453. Tyr460 functions as the Proton donor in the catalytic mechanism.

It belongs to the polysaccharide lyase 8 family.

The catalysed reaction is Exolytic removal of Delta(4)-unsaturated disaccharide residues from the non-reducing ends of both polymeric chondroitin/dermatan sulfates and their oligosaccharide fragments.. Inhibited by Zn(2+), whereas Ni(2+), Fe(2+), and Cu(2+) have little or no effect on activity. Its function is as follows. Broad-specificity glycosaminoglycan lyase, which acts in an exolytic fashion, and preferentially degrades the tetra- and hexasaccharide derivatives of chondroitin sulfate and dermatan sulfate produced by the chondroitin sulfate ABC endolyase, to yield the respective disaccharides. To a lesser extent, is also able to split off disaccharide residues directly from polymeric chondroitin 4- and 6-sulfate, dermatan sulfate, chondroitin, and hyaluronan. Is not active against keratan sulfate, heparan sulfate, and heparin. The protein is Chondroitin sulfate ABC exolyase (ChABCII) of Proteus vulgaris.